We begin with the raw amino-acid sequence, 200 residues long: MPIEFIATSKLPTAFGEFNISVFQDPVTGEEHVALSKGLENPPTGPVLVRVHSECLTGDAFASLKCDCGPQLQATQKLINEAGQGVILYLRQEGRGIGLTNKIRAYALQDQGHDTVDANLLLNLPADARRYDMCSIMLDHLKVKEVKLITNNPLKIQALKDQGINVVDRVPLTVGRNPFNEQYLKTKRERMDHLYQKDDF.

Position 50–54 (50–54 (RVHSE)) interacts with GTP. Zn(2+) contacts are provided by Cys-55, Cys-66, and Cys-68. GTP is bound by residues Gln-71, 93 to 95 (EGR), and Thr-115. Asp-127 (proton acceptor) is an active-site residue. Catalysis depends on Arg-129, which acts as the Nucleophile. GTP is bound by residues Thr-150 and Lys-155.

The protein belongs to the GTP cyclohydrolase II family. Zn(2+) serves as cofactor.

The catalysed reaction is GTP + 4 H2O = 2,5-diamino-6-hydroxy-4-(5-phosphoribosylamino)-pyrimidine + formate + 2 phosphate + 3 H(+). The protein operates within cofactor biosynthesis; riboflavin biosynthesis; 5-amino-6-(D-ribitylamino)uracil from GTP: step 1/4. Catalyzes the conversion of GTP to 2,5-diamino-6-ribosylamino-4(3H)-pyrimidinone 5'-phosphate (DARP), formate and pyrophosphate. In Acinetobacter baumannii (strain AB307-0294), this protein is GTP cyclohydrolase-2.